We begin with the raw amino-acid sequence, 337 residues long: MSLKLGVIGAGAIGKEHIRRCTQVLQGATVVAVSDINADNARAAVALPGVQAEVYADGHDVINASDVDAILVTSWDPTHEEYTLAAIAAGKPVFCEKPLAMSAEGCRRIVDAEMKAGRRLVQVGFMRPYDEGYLALKKVIDDGDIGAPLMLRCAHRNQSVGENYTTDMAITNTLIHELDVLRWLLNDDYRSVQVRFPRSTSHTHARLKDPQIVSFETKKGTLIDVEVFVNCQYGYDIQCEVVGETGIARLPEPSAVQMRKSASLSTAILTDWKDRFIKAYDVELQAFINDVKAGQLHGPSAWDGYAASVAADACIKAQGTSEPVEVTLPECPAFYKR.

It belongs to the Gfo/Idh/MocA family. As to quaternary structure, homotetramer.

It carries out the reaction myo-inositol + NAD(+) = scyllo-inosose + NADH + H(+). In terms of biological role, involved in the oxidation of myo-inositol (MI) to 2-keto-myo-inositol (2KMI or 2-inosose). This is Inositol 2-dehydrogenase from Klebsiella pneumoniae (strain 342).